A 543-amino-acid polypeptide reads, in one-letter code: Carboxypeptidase Y homolog A (543 aa).

The signal sequence occupies residues 1-17; that stretch reads MKFLTTGLLATAALAAA. A propeptide spanning residues 18–124 is cleaved from the precursor; that stretch reads QEQQVLQAED…KLHNYDLRVK (107 aa). 5 disulfide bridges follow: Cys179/Cys419, Cys313/Cys327, Cys337/Cys360, Cys344/Cys353, and Cys382/Cys389. Residue Asn210 is glycosylated (N-linked (GlcNAc...) asparagine). Ser266 is a catalytic residue. Residue Asp458 is part of the active site. Asn509 carries N-linked (GlcNAc...) asparagine glycosylation. Residue His520 is part of the active site.

This sequence belongs to the peptidase S10 family.

Its subcellular location is the vacuole. It carries out the reaction Release of a C-terminal amino acid with broad specificity.. Vacuolar carboxypeptidase involved in degradation of small peptides. Digests preferentially peptides containing an aliphatic or hydrophobic residue in P1' position, as well as methionine, leucine or phenylalanine in P1 position of ester substrate. The polypeptide is Carboxypeptidase Y homolog A (CPYA) (Trichophyton tonsurans (Scalp ringworm fungus)).